Consider the following 302-residue polypeptide: Arginase (302 aa).

Residues H103, D126, H128, and D130 each contribute to the Mn(2+) site. Substrate-binding positions include 128 to 132, 139 to 141, and D180; these read HGDLN and SGN. The Mn(2+) site is built by D229 and D231. 2 residues coordinate substrate: T243 and E274.

This sequence belongs to the arginase family. It depends on Mn(2+) as a cofactor.

It carries out the reaction L-arginine + H2O = urea + L-ornithine. It participates in nitrogen metabolism; urea cycle; L-ornithine and urea from L-arginine: step 1/1. The protein is Arginase (arg) of Staphylococcus aureus (strain MRSA252).